A 90-amino-acid chain; its full sequence is Small ribosomal subunit protein bS20 (90 aa).

It belongs to the bacterial ribosomal protein bS20 family.

Its function is as follows. Binds directly to 16S ribosomal RNA. This chain is Small ribosomal subunit protein bS20, found in Mesomycoplasma hyopneumoniae (strain J / ATCC 25934 / NCTC 10110) (Mycoplasma hyopneumoniae).